We begin with the raw amino-acid sequence, 385 residues long: MSWQQRVDDALTARRATDTLRRRYVVSQGAGRWLVANGRQYLNFSSNDYLGLSQHPQIIRAWQQAATRFGVGSGGSGHISGYSVAHQALEEELAQWLGYPRALLFISGFAANQAVITALMKKNDRIVADRLSHASLLEAANLSPAQLRRFIHNDTQHLSRLLQSPSVGQQLVVTEGVYSMDGDSAPLAEIQHIARRHHAWLLVDDAHGIGVTGDEGRGTCWLRGVKPELLVVTFGKGFGVSGAAVLCSESVADYLLQFARHLVYSTSMPPAQAQALSASLAVIRSDEGGERREKLAALVQRFRAGVNASRFTLLNAHSAIQPLIVGDNSRALRLAEALRQQGCWATAIRPPTVPVGTARLRLTLTQAHEACDIDRLLEVLHGAGE.

A substrate-binding site is contributed by R21. 108–109 (GF) contributes to the pyridoxal 5'-phosphate binding site. H133 contributes to the substrate binding site. S179, H207, and T233 together coordinate pyridoxal 5'-phosphate. At K236 the chain carries N6-(pyridoxal phosphate)lysine. T352 provides a ligand contact to substrate.

The protein belongs to the class-II pyridoxal-phosphate-dependent aminotransferase family. BioF subfamily. Homodimer. Requires pyridoxal 5'-phosphate as cofactor.

The enzyme catalyses 6-carboxyhexanoyl-[ACP] + L-alanine + H(+) = (8S)-8-amino-7-oxononanoate + holo-[ACP] + CO2. It functions in the pathway cofactor biosynthesis; biotin biosynthesis. Its function is as follows. Catalyzes the decarboxylative condensation of pimeloyl-[acyl-carrier protein] and L-alanine to produce 8-amino-7-oxononanoate (AON), [acyl-carrier protein], and carbon dioxide. This chain is 8-amino-7-oxononanoate synthase, found in Salmonella paratyphi B (strain ATCC BAA-1250 / SPB7).